A 202-amino-acid polypeptide reads, in one-letter code: ATP-dependent Clp protease proteolytic subunit (202 aa).

S101 (nucleophile) is an active-site residue. Residue H126 is part of the active site.

The protein belongs to the peptidase S14 family. In terms of assembly, component of the chloroplastic Clp protease core complex.

The protein localises to the plastid. Its subcellular location is the chloroplast stroma. It catalyses the reaction Hydrolysis of proteins to small peptides in the presence of ATP and magnesium. alpha-casein is the usual test substrate. In the absence of ATP, only oligopeptides shorter than five residues are hydrolyzed (such as succinyl-Leu-Tyr-|-NHMec, and Leu-Tyr-Leu-|-Tyr-Trp, in which cleavage of the -Tyr-|-Leu- and -Tyr-|-Trp bonds also occurs).. Its function is as follows. Cleaves peptides in various proteins in a process that requires ATP hydrolysis. Has a chymotrypsin-like activity. Plays a major role in the degradation of misfolded proteins. This is ATP-dependent Clp protease proteolytic subunit from Acorus gramineus (Dwarf sweet flag).